The sequence spans 123 residues: UPF0738 protein BALH_1059 (123 aa).

This sequence belongs to the UPF0738 family.

The chain is UPF0738 protein BALH_1059 from Bacillus thuringiensis (strain Al Hakam).